The chain runs to 124 residues: UPF0102 protein Noca_3248 (124 aa).

This sequence belongs to the UPF0102 family.

This Nocardioides sp. (strain ATCC BAA-499 / JS614) protein is UPF0102 protein Noca_3248.